Reading from the N-terminus, the 162-residue chain is Protein NrdI (162 aa).

The protein belongs to the NrdI family.

Its function is as follows. Probably involved in ribonucleotide reductase function. The chain is Protein NrdI from Streptococcus pyogenes serotype M28 (strain MGAS6180).